Here is a 242-residue protein sequence, read N- to C-terminus: MTSGFALDVRNWTETLGWQPSPQQQQQFEALYHGIIAGNQRLNLTRITDPAEFTEKHLWDSLYGLRPLLTDDWSGEIIDIGTGGGFPGLPAAIALTKSRVMLLDSTRKKIQFLQTLAQELGLSNVTVAVGRAEEWGRDRRQRARYDWATIRAVGPATVCAEYCLPLLKIGGKAVLYRGQWTEEEAIALDRAVTILGGEVVDVSATFLPESGAERHCITLQKTAQTPAAYPRMVGLPSQKPLG.

Residues Gly-81, Phe-86, 104–106, 132–133, and Arg-151 contribute to the S-adenosyl-L-methionine site; these read DST and AE.

Belongs to the methyltransferase superfamily. RNA methyltransferase RsmG family.

Its subcellular location is the cytoplasm. Functionally, specifically methylates the N7 position of a guanine in 16S rRNA. This chain is Ribosomal RNA small subunit methyltransferase G, found in Synechococcus elongatus (strain ATCC 33912 / PCC 7942 / FACHB-805) (Anacystis nidulans R2).